The primary structure comprises 360 residues: Phospho-N-acetylmuramoyl-pentapeptide-transferase (360 aa).

A run of 11 helical transmembrane segments spans residues 2-22 (LVWVADFLAQYFSIFSVFQYL), 26-46 (AILGVLTALLISLLVGPVMIR), 73-93 (TMGGALILVAIAVSTLLWADL), 97-117 (YVLITLGVTLLFGAIGWVDDW), 134-154 (YFWQSVFGFGAAVLLFKTAHL), 168-188 (ITLALGVGFVLLTYFVIVGGS), 199-219 (GLAIMPTVMVGGALAVFAYLS), 236-256 (TGELVIFLGALVGAGLGFLWF), 263-283 (VFMGDVGALALGAALGVVAVI), 288-308 (LVFFVMGGVFVMETVSVILQV), and 339-359 (IVRFWVITVVLVLVGLATLKI).

It belongs to the glycosyltransferase 4 family. MraY subfamily. It depends on Mg(2+) as a cofactor.

The protein localises to the cell inner membrane. The catalysed reaction is UDP-N-acetyl-alpha-D-muramoyl-L-alanyl-gamma-D-glutamyl-meso-2,6-diaminopimeloyl-D-alanyl-D-alanine + di-trans,octa-cis-undecaprenyl phosphate = di-trans,octa-cis-undecaprenyl diphospho-N-acetyl-alpha-D-muramoyl-L-alanyl-D-glutamyl-meso-2,6-diaminopimeloyl-D-alanyl-D-alanine + UMP. It participates in cell wall biogenesis; peptidoglycan biosynthesis. In terms of biological role, catalyzes the initial step of the lipid cycle reactions in the biosynthesis of the cell wall peptidoglycan: transfers peptidoglycan precursor phospho-MurNAc-pentapeptide from UDP-MurNAc-pentapeptide onto the lipid carrier undecaprenyl phosphate, yielding undecaprenyl-pyrophosphoryl-MurNAc-pentapeptide, known as lipid I. This Hahella chejuensis (strain KCTC 2396) protein is Phospho-N-acetylmuramoyl-pentapeptide-transferase.